The following is a 127-amino-acid chain: Fluoride-specific ion channel FluC (127 aa).

Transmembrane regions (helical) follow at residues 6–26 (LAIS…GLGF), 37–57 (TLLA…FFAA), 67–87 (LLVI…SAEV), and 96–116 (LLWA…MTLL). Na(+) contacts are provided by glycine 75 and threonine 78.

It belongs to the fluoride channel Fluc/FEX (TC 1.A.43) family.

The protein localises to the cell inner membrane. It carries out the reaction fluoride(in) = fluoride(out). Na(+) is not transported, but it plays an essential structural role and its presence is essential for fluoride channel function. Its function is as follows. Fluoride-specific ion channel. Important for reducing fluoride concentration in the cell, thus reducing its toxicity. The sequence is that of Fluoride-specific ion channel FluC from Tolumonas auensis (strain DSM 9187 / NBRC 110442 / TA 4).